A 64-amino-acid chain; its full sequence is Prokaryotic ubiquitin-like protein Pup (64 aa).

Residues 1-37 (MAQEQTQRAGGGEDDETTGGDGSAGQERREKLAAETD) are disordered. An ARC ATPase binding region spans residues 21 to 58 (DGSAGQERREKLAAETDDLLDEIDDVLEENAEDFVRAY). Residues 24–52 (AGQERREKLAAETDDLLDEIDDVLEENAE) adopt a coiled-coil conformation. At glutamine 64 the chain carries Deamidated glutamine. Glutamine 64 is covalently cross-linked (Isoglutamyl lysine isopeptide (Gln-Lys) (interchain with K-? in acceptor proteins)).

This sequence belongs to the prokaryotic ubiquitin-like protein family. Strongly interacts with the proteasome-associated ATPase ARC through a hydrophobic interface; the interacting region of Pup lies in its C-terminal half. There is one Pup binding site per ARC hexamer ring. In terms of processing, is modified by deamidation of its C-terminal glutamine to glutamate by the deamidase Dop, a prerequisite to the subsequent pupylation process.

Its pathway is protein degradation; proteasomal Pup-dependent pathway. Protein modifier that is covalently attached to lysine residues of substrate proteins, thereby targeting them for proteasomal degradation. The tagging system is termed pupylation. This chain is Prokaryotic ubiquitin-like protein Pup, found in Rhodococcus erythropolis (strain PR4 / NBRC 100887).